A 155-amino-acid polypeptide reads, in one-letter code: Probable calcium-binding protein CML9 (155 aa).

3 EF-hand domains span residues 8–43 (EQVD…LGQN), 86–121 (ATEK…HGDR), and 122–155 (LTEE…MNNK). Residues Asp21, Asp23, Asp25, Arg27, and Glu32 each coordinate Ca(2+).

Functionally, potential calcium sensor. This is Probable calcium-binding protein CML9 (CML9) from Oryza sativa subsp. japonica (Rice).